Here is a 115-residue protein sequence, read N- to C-terminus: Phosphoribosyl-AMP cyclohydrolase (115 aa).

Residue Asp80 participates in Mg(2+) binding. Position 81 (Cys81) interacts with Zn(2+). The Mg(2+) site is built by Asp82 and Asp84. Residues Cys97 and Cys104 each contribute to the Zn(2+) site.

The protein belongs to the PRA-CH family. As to quaternary structure, homodimer. Mg(2+) is required as a cofactor. The cofactor is Zn(2+).

The protein resides in the cytoplasm. The enzyme catalyses 1-(5-phospho-beta-D-ribosyl)-5'-AMP + H2O = 1-(5-phospho-beta-D-ribosyl)-5-[(5-phospho-beta-D-ribosylamino)methylideneamino]imidazole-4-carboxamide. It functions in the pathway amino-acid biosynthesis; L-histidine biosynthesis; L-histidine from 5-phospho-alpha-D-ribose 1-diphosphate: step 3/9. Its function is as follows. Catalyzes the hydrolysis of the adenine ring of phosphoribosyl-AMP. The polypeptide is Phosphoribosyl-AMP cyclohydrolase (Mycolicibacterium paratuberculosis (strain ATCC BAA-968 / K-10) (Mycobacterium paratuberculosis)).